A 339-amino-acid polypeptide reads, in one-letter code: Anthranilate phosphoribosyltransferase (339 aa).

Residues G79, 82-83, T87, 89-92, 107-115, and S119 contribute to the 5-phospho-alpha-D-ribose 1-diphosphate site; these read GD, NVST, and KHGNRAVSS. G79 lines the anthranilate pocket. Residue S91 coordinates Mg(2+). N110 is a binding site for anthranilate. R165 lines the anthranilate pocket. Mg(2+) contacts are provided by D224 and E225.

This sequence belongs to the anthranilate phosphoribosyltransferase family. As to quaternary structure, homodimer. Requires Mg(2+) as cofactor.

The catalysed reaction is N-(5-phospho-beta-D-ribosyl)anthranilate + diphosphate = 5-phospho-alpha-D-ribose 1-diphosphate + anthranilate. It functions in the pathway amino-acid biosynthesis; L-tryptophan biosynthesis; L-tryptophan from chorismate: step 2/5. Catalyzes the transfer of the phosphoribosyl group of 5-phosphorylribose-1-pyrophosphate (PRPP) to anthranilate to yield N-(5'-phosphoribosyl)-anthranilate (PRA). The chain is Anthranilate phosphoribosyltransferase from Geobacillus kaustophilus (strain HTA426).